A 183-amino-acid chain; its full sequence is Copper transporter 4 (183 aa).

The interval 1–21 (MAMPMPMPPPGPGGDAPPAPT) is disordered. 2 helical membrane passes run 56–76 (VGMY…AEAL) and 115–135 (LAYL…LAAV).

It belongs to the copper transporter (Ctr) (TC 1.A.56) family. SLC31A subfamily.

It localises to the membrane. Its function is as follows. Involved in the transport of copper. This Oryza sativa subsp. japonica (Rice) protein is Copper transporter 4 (COPT4).